The chain runs to 201 residues: Lipopolysaccharide core heptose(II)-phosphate phosphatase (201 aa).

Positions 1–35 (MLAFTLRFIKNKRYLATLAGALVIIAGLTSQHAWS) are cleaved as a signal peptide.

The protein belongs to the phosphoglycerate mutase family. Ais subfamily.

Its subcellular location is the periplasm. Its pathway is bacterial outer membrane biogenesis; lipopolysaccharide metabolism. In terms of biological role, catalyzes the dephosphorylation of heptose(II) of the outer membrane lipopolysaccharide core. The sequence is that of Lipopolysaccharide core heptose(II)-phosphate phosphatase from Salmonella choleraesuis (strain SC-B67).